The following is a 169-amino-acid chain: Disulfide bond formation protein B 1 (169 aa).

Residues 1 to 14 lie on the Cytoplasmic side of the membrane; sequence MSEETIRLGRERRY. A helical membrane pass occupies residues 15 to 31; it reads LVLLGIICLALIGGALY. Residues 32 to 49 lie on the Periplasmic side of the membrane; sequence MQIVLGEAPCPLCILQRY. Cys41 and Cys44 are disulfide-bonded. Residues 50–64 form a helical membrane-spanning segment; sequence ALLLIALFAFIGAAM. The Cytoplasmic segment spans residues 65-71; that stretch reads RTRRSIT. Residues 72–89 form a helical membrane-spanning segment; the sequence is VFEVLVVICAIAGAGVAG. At 90 to 144 the chain is on the periplasmic side; sequence HHVYTQFYPAVSCGIDVLQPIVDDLPLAKIFPLGFQVDGFCSTPYPPILGLSLAQ. Cys102 and Cys130 are disulfide-bonded. A helical transmembrane segment spans residues 145-163; it reads WALVAFVLVVILVPLLTSR. The Cytoplasmic segment spans residues 164-169; it reads NRKALR.

It belongs to the DsbB family.

It localises to the cell inner membrane. Required for disulfide bond formation in some periplasmic proteins. Acts by oxidizing the DsbA protein. The polypeptide is Disulfide bond formation protein B 1 (Pseudomonas fluorescens (strain Pf0-1)).